The chain runs to 201 residues: Large ribosomal subunit protein bL25 (201 aa).

This sequence belongs to the bacterial ribosomal protein bL25 family. CTC subfamily. As to quaternary structure, part of the 50S ribosomal subunit; part of the 5S rRNA/L5/L18/L25 subcomplex. Contacts the 5S rRNA. Binds to the 5S rRNA independently of L5 and L18.

In terms of biological role, this is one of the proteins that binds to the 5S RNA in the ribosome where it forms part of the central protuberance. The protein is Large ribosomal subunit protein bL25 of Burkholderia lata (strain ATCC 17760 / DSM 23089 / LMG 22485 / NCIMB 9086 / R18194 / 383).